The chain runs to 74 residues: DNA-directed RNA polymerase subunit omega (74 aa).

The protein belongs to the RNA polymerase subunit omega family. As to quaternary structure, the RNAP catalytic core consists of 2 alpha, 1 beta, 1 beta' and 1 omega subunit. When a sigma factor is associated with the core the holoenzyme is formed, which can initiate transcription.

The enzyme catalyses RNA(n) + a ribonucleoside 5'-triphosphate = RNA(n+1) + diphosphate. Promotes RNA polymerase assembly. Latches the N- and C-terminal regions of the beta' subunit thereby facilitating its interaction with the beta and alpha subunits. The chain is DNA-directed RNA polymerase subunit omega from Campylobacter jejuni subsp. jejuni serotype O:6 (strain 81116 / NCTC 11828).